A 286-amino-acid polypeptide reads, in one-letter code: Bifunctional protein FolD (286 aa).

NADP(+) contacts are provided by residues 167-169 and I233; that span reads GRS.

The protein belongs to the tetrahydrofolate dehydrogenase/cyclohydrolase family. As to quaternary structure, homodimer.

It carries out the reaction (6R)-5,10-methylene-5,6,7,8-tetrahydrofolate + NADP(+) = (6R)-5,10-methenyltetrahydrofolate + NADPH. The enzyme catalyses (6R)-5,10-methenyltetrahydrofolate + H2O = (6R)-10-formyltetrahydrofolate + H(+). It functions in the pathway one-carbon metabolism; tetrahydrofolate interconversion. In terms of biological role, catalyzes the oxidation of 5,10-methylenetetrahydrofolate to 5,10-methenyltetrahydrofolate and then the hydrolysis of 5,10-methenyltetrahydrofolate to 10-formyltetrahydrofolate. The sequence is that of Bifunctional protein FolD from Limosilactobacillus reuteri (strain DSM 20016) (Lactobacillus reuteri).